We begin with the raw amino-acid sequence, 255 residues long: MALPAARSALSARAFIRPAAALNAAASSSRYLSTTTPRHDAPVATTPGNSETALPVPLPGIKFLSMPPVTPHPPTHGIHVATLHLQAHHPYNLDLVSQFAVHSAHSLNIPTSLPAFLPREKSLYTVLKSPFVKKKAQENFERRTHKRAIKVYDADREAIDLWLRYLRQNALPGVGMKAYIHEWVELGFGRKEAEGQNEIEMEVEEKRIQDAAAELVKALSEGEGEDQAEGVQKIVDAAREEKPAEKLKEEEAKSS.

The N-terminal 32 residues, 1 to 32 (MALPAARSALSARAFIRPAAALNAAASSSRYL), are a transit peptide targeting the mitochondrion. Disordered stretches follow at residues 30–52 (RYLS…NSET) and 220–255 (SEGE…AKSS). Residues 236–255 (DAAREEKPAEKLKEEEAKSS) show a composition bias toward basic and acidic residues.

It belongs to the universal ribosomal protein uS10 family. Part of the mitochondrial small ribosomal subunit.

It is found in the mitochondrion. Its function is as follows. Involved in mitochondrial genome encoded proteins translation. Involved in the binding of tRNA to the ribosomes. The polypeptide is Small ribosomal subunit protein uS10m (RSM10) (Cryptococcus neoformans var. neoformans serotype D (strain B-3501A) (Filobasidiella neoformans)).